We begin with the raw amino-acid sequence, 362 residues long: Molybdenum import ATP-binding protein ModC (362 aa).

The ABC transporter domain maps to 2-236 (ASPIEVRLQM…LDLPLAMGSD (235 aa)). 34-41 (GPSGSGKT) contacts ATP. Residues 297–362 (QSSILNRLPV…AQIKAVAVLA (66 aa)) enclose the Mop domain.

It belongs to the ABC transporter superfamily. Molybdate importer (TC 3.A.1.8) family. As to quaternary structure, the complex is composed of two ATP-binding proteins (ModC), two transmembrane proteins (ModB) and a solute-binding protein (ModA).

The protein resides in the cell inner membrane. The enzyme catalyses molybdate(out) + ATP + H2O = molybdate(in) + ADP + phosphate + H(+). Its function is as follows. Part of the ABC transporter complex ModABC involved in molybdenum import. Responsible for energy coupling to the transport system. In Pseudomonas syringae pv. syringae (strain B728a), this protein is Molybdenum import ATP-binding protein ModC.